The chain runs to 252 residues: Triosephosphate isomerase (252 aa).

Residue 9–11 (NWK) coordinates substrate. Residue histidine 96 is the Electrophile of the active site. The active-site Proton acceptor is glutamate 168. Substrate contacts are provided by residues glycine 174, serine 214, and 235–236 (GG).

The protein belongs to the triosephosphate isomerase family. In terms of assembly, homodimer.

The protein localises to the cytoplasm. The enzyme catalyses D-glyceraldehyde 3-phosphate = dihydroxyacetone phosphate. Its pathway is carbohydrate biosynthesis; gluconeogenesis. It functions in the pathway carbohydrate degradation; glycolysis; D-glyceraldehyde 3-phosphate from glycerone phosphate: step 1/1. Involved in the gluconeogenesis. Catalyzes stereospecifically the conversion of dihydroxyacetone phosphate (DHAP) to D-glyceraldehyde-3-phosphate (G3P). The polypeptide is Triosephosphate isomerase (Chloroherpeton thalassium (strain ATCC 35110 / GB-78)).